The chain runs to 305 residues: Taste receptor type 2 member 13 (305 aa).

Over 1 to 7 the chain is Extracellular; the sequence is MGSNVYG. A helical transmembrane segment spans residues 8-28; it reads ILTMVMIAEFVFGNMSNGFIV. Over 29-43 the chain is Cytoplasmic; the sequence is LINCIDWVRKGTLSS. The helical transmembrane segment at 44–64 threads the bilayer; sequence IGWILLFLAISRMVLIWEMLI. Over 65-88 the chain is Extracellular; the sequence is TWIKYMKYSFSFVTGTELRGIMFT. Residues 89 to 109 form a helical membrane-spanning segment; that stretch reads WVISNHFSLWLATILSIFYLL. The Cytoplasmic segment spans residues 110–128; it reads KIASFSKPVFLYLKWREKK. The chain crosses the membrane as a helical span at residues 129–149; sequence VLLIVLLGNLIFLMLNILQIN. At 150–182 the chain is on the extracellular side; the sequence is KHIEHWMYQYERNITWSSRVSDFAGFSNLVLLE. An N-linked (GlcNAc...) asparagine glycan is attached at Asn-162. The chain crosses the membrane as a helical span at residues 183 to 203; it reads MIVFSVTPFTVALVSFILLIF. At 204–232 the chain is on the cytoplasmic side; the sequence is SLWKHLQKMHLNSRGERDPSTKAHVNALR. The helical transmembrane segment at 233 to 253 threads the bilayer; it reads IMVSFLLLYATYFISFFLSLI. The Extracellular portion of the chain corresponds to 254–262; it reads PMAHKTRLG. A helical membrane pass occupies residues 263-283; sequence LMFSITVGLFYPSSHSFILIL. The Cytoplasmic portion of the chain corresponds to 284 to 305; that stretch reads GHSNLRQASLWVMTYLKCGQKH.

It belongs to the G-protein coupled receptor T2R family.

It is found in the cell membrane. Receptor that may play a role in the perception of bitterness and is gustducin-linked. May play a role in sensing the chemical composition of the gastrointestinal content. The activity of this receptor may stimulate alpha gustducin, mediate PLC-beta-2 activation and lead to the gating of TRPM5. The chain is Taste receptor type 2 member 13 from Mus musculus (Mouse).